Consider the following 353-residue polypeptide: Alanine racemase (353 aa).

The active-site Proton acceptor; specific for D-alanine is the K33. K33 carries the N6-(pyridoxal phosphate)lysine modification. A substrate-binding site is contributed by R129. Catalysis depends on Y250, which acts as the Proton acceptor; specific for L-alanine. M298 is a binding site for substrate.

The protein belongs to the alanine racemase family. Pyridoxal 5'-phosphate serves as cofactor.

It catalyses the reaction L-alanine = D-alanine. It functions in the pathway amino-acid biosynthesis; D-alanine biosynthesis; D-alanine from L-alanine: step 1/1. In terms of biological role, catalyzes the interconversion of L-alanine and D-alanine. May also act on other amino acids. The protein is Alanine racemase (alr) of Azoarcus sp. (strain BH72).